The following is a 238-amino-acid chain: Ribonuclease PH (238 aa).

Phosphate is bound by residues R86 and G124–R126.

It belongs to the RNase PH family. Homohexameric ring arranged as a trimer of dimers.

The enzyme catalyses tRNA(n+1) + phosphate = tRNA(n) + a ribonucleoside 5'-diphosphate. Its function is as follows. Phosphorolytic 3'-5' exoribonuclease that plays an important role in tRNA 3'-end maturation. Removes nucleotide residues following the 3'-CCA terminus of tRNAs; can also add nucleotides to the ends of RNA molecules by using nucleoside diphosphates as substrates, but this may not be physiologically important. Probably plays a role in initiation of 16S rRNA degradation (leading to ribosome degradation) during starvation. The polypeptide is Ribonuclease PH (Yersinia pseudotuberculosis serotype O:1b (strain IP 31758)).